The primary structure comprises 779 residues: Transcription activator of gluconeogenesis BDCG_02812 (779 aa).

Positions 1-70 are disordered; that stretch reads MTASTRNGSP…NAKDPLRPRR (70 aa). The segment covering 25 to 61 has biased composition (polar residues); that stretch reads KSMTTTPANPPETKSQTNGKGSGTAQSSQKPASTSAN. A DNA-binding region (zn(2)-C6 fungal-type) is located at residues 77-105; that stretch reads CFACQRAHLTCGDERPCQRCIKRGLQDAC. 6 disordered regions span residues 135-163, 202-239, 285-344, 401-421, 559-590, and 655-732; these read QANT…QSVS, SVFH…SVSG, GAGD…ANPR, TNLM…PGLK, GSSL…PHTG, and FHGK…QTWG. Positions 202–226 are enriched in polar residues; the sequence is SVFHAQSPSSTQNFDLSSNPQTQNL. Over residues 227-238 the composition is skewed to low complexity; it reads SSAMSQTASSVS. Composition is skewed to polar residues over residues 291–322, 333–344, and 401–416; these read PSDS…NQSP, WNPTGQGQANPR, and TNLM…SRIS. Positions 560–572 are enriched in low complexity; the sequence is SSLSSASSVRGSS. Over residues 573 to 586 the composition is skewed to polar residues; it reads TFTPRNNNTHNSID. A compositionally biased stretch (low complexity) spans 672 to 719; sequence TGTTTSGDVATTTATGTSTSNGANANTNGNNTNPNDPSSAASSSASSA. Positions 720-729 are enriched in polar residues; the sequence is LQGPQQSPRQ.

It belongs to the ERT1/acuK family.

The protein localises to the nucleus. Its function is as follows. Transcription factor which regulates nonfermentable carbon utilization. Activator of gluconeogenetic genes. The chain is Transcription activator of gluconeogenesis BDCG_02812 from Ajellomyces dermatitidis (strain ER-3 / ATCC MYA-2586) (Blastomyces dermatitidis).